Consider the following 557-residue polypeptide: Carbamoyl phosphate synthase large chain, N-terminal section (557 aa).

Residues 1–402 (MPKRTDIKKI…ALLKAVRSLE (402 aa)) are carboxyphosphate synthetic domain. The ATP site is built by arginine 129, arginine 169, glycine 175, glycine 176, lysine 208, leucine 210, glutamate 215, glycine 241, valine 242, histidine 243, glutamine 285, and glutamate 299. One can recognise an ATP-grasp domain in the interval 133 to 328 (KETMESIGLK…IAKVAAKLAV (196 aa)). Mg(2+)-binding residues include glutamine 285, glutamate 299, and asparagine 301. Mn(2+) is bound by residues glutamine 285, glutamate 299, and asparagine 301. Residues 403–553 (LDRYGLAFPK…PYYTVDGQEI (151 aa)) are oligomerization domain.

Belongs to the CarB family. In terms of assembly, composed of two chains; the small (or glutamine) chain promotes the hydrolysis of glutamine to ammonia, which is used by the large (or ammonia) chain to synthesize carbamoyl phosphate. Tetramer of heterodimers (alpha,beta)4. The cofactor is Mg(2+). Mn(2+) serves as cofactor.

It catalyses the reaction hydrogencarbonate + L-glutamine + 2 ATP + H2O = carbamoyl phosphate + L-glutamate + 2 ADP + phosphate + 2 H(+). The catalysed reaction is hydrogencarbonate + NH4(+) + 2 ATP = carbamoyl phosphate + 2 ADP + phosphate + 2 H(+). It functions in the pathway amino-acid biosynthesis; L-arginine biosynthesis; carbamoyl phosphate from bicarbonate: step 1/1. It participates in pyrimidine metabolism; UMP biosynthesis via de novo pathway; (S)-dihydroorotate from bicarbonate: step 1/3. Functionally, large subunit of the glutamine-dependent carbamoyl phosphate synthetase (CPSase). CPSase catalyzes the formation of carbamoyl phosphate from the ammonia moiety of glutamine, carbonate, and phosphate donated by ATP, constituting the first step of 2 biosynthetic pathways, one leading to arginine and/or urea and the other to pyrimidine nucleotides. The large subunit (synthetase) binds the substrates ammonia (free or transferred from glutamine from the small subunit), hydrogencarbonate and ATP and carries out an ATP-coupled ligase reaction, activating hydrogencarbonate by forming carboxy phosphate which reacts with ammonia to form carbamoyl phosphate. The protein is Carbamoyl phosphate synthase large chain, N-terminal section (carB1) of Aquifex aeolicus (strain VF5).